The sequence spans 277 residues: Undecaprenyl-diphosphatase (277 aa).

The next 6 membrane-spanning stretches (helical) occupy residues 44–64, 86–106, 110–130, 184–204, 215–235, and 250–270; these read RAMA…VWEF, GNLL…ADLI, LFNP…MLWA, AATE…AVYS, GDLP…MIAV, and FAWY…FGWV.

It belongs to the UppP family.

Its subcellular location is the cell inner membrane. The catalysed reaction is di-trans,octa-cis-undecaprenyl diphosphate + H2O = di-trans,octa-cis-undecaprenyl phosphate + phosphate + H(+). Catalyzes the dephosphorylation of undecaprenyl diphosphate (UPP). Confers resistance to bacitracin. This is Undecaprenyl-diphosphatase from Pseudomonas putida (strain ATCC 47054 / DSM 6125 / CFBP 8728 / NCIMB 11950 / KT2440).